The sequence spans 393 residues: DNA-directed RNA polymerase subunit Rpo1C (393 aa).

It belongs to the RNA polymerase beta' chain family. As to quaternary structure, part of the 13-subunit RNA polymerase complex. Interacts with TFS4.

It is found in the cytoplasm. It catalyses the reaction RNA(n) + a ribonucleoside 5'-triphosphate = RNA(n+1) + diphosphate. Functionally, DNA-dependent RNA polymerase (RNAP) catalyzes the transcription of DNA into RNA using the four ribonucleoside triphosphates as substrates. Forms part of the jaw domain. Reconstitution experiments show this subunit is required for basic activity. The chain is DNA-directed RNA polymerase subunit Rpo1C from Sulfolobus acidocaldarius (strain ATCC 33909 / DSM 639 / JCM 8929 / NBRC 15157 / NCIMB 11770).